Here is a 212-residue protein sequence, read N- to C-terminus: MKQYQKDFVDFMLGSGALKFGEFTLKSGRVSPYFFNTGAFNTGQHLSQLGKFYATAIENSILDFDVLFGLAYKGIPLVTATTIALNDGFSKNVPYSFNRKEVKIHGEGGDIVGHQLEGNILIIDDVITVGTAIIEAMSIIKANGATAKGVIVAVDRQEKGKGEQSTIQEVEQNFGLSVLSIINLSHLVDYLKQGNDHALIERIEVYRDCYGV.

Lys-26 contributes to the 5-phospho-alpha-D-ribose 1-diphosphate binding site. Orotate is bound at residue 34-35 (FF). 5-phospho-alpha-D-ribose 1-diphosphate is bound by residues 72 to 73 (YK), Arg-99, Lys-100, Lys-103, His-105, and 124 to 132 (DDVITVGTA). Orotate-binding residues include Thr-128 and Arg-156.

Belongs to the purine/pyrimidine phosphoribosyltransferase family. PyrE subfamily. As to quaternary structure, homodimer. Requires Mg(2+) as cofactor.

The catalysed reaction is orotidine 5'-phosphate + diphosphate = orotate + 5-phospho-alpha-D-ribose 1-diphosphate. The protein operates within pyrimidine metabolism; UMP biosynthesis via de novo pathway; UMP from orotate: step 1/2. Catalyzes the transfer of a ribosyl phosphate group from 5-phosphoribose 1-diphosphate to orotate, leading to the formation of orotidine monophosphate (OMP). The polypeptide is Orotate phosphoribosyltransferase (Ruthia magnifica subsp. Calyptogena magnifica).